The chain runs to 902 residues: Aconitate hydratase A (902 aa).

The [4Fe-4S] cluster site is built by Cys441, Cys507, and Cys510.

It belongs to the aconitase/IPM isomerase family. Monomer. [4Fe-4S] cluster serves as cofactor.

The enzyme catalyses citrate = D-threo-isocitrate. It carries out the reaction (2S,3R)-3-hydroxybutane-1,2,3-tricarboxylate = 2-methyl-cis-aconitate + H2O. The protein operates within carbohydrate metabolism; tricarboxylic acid cycle; isocitrate from oxaloacetate: step 2/2. It functions in the pathway organic acid metabolism; propanoate degradation. Its function is as follows. Involved in the catabolism of short chain fatty acids (SCFA) via the tricarboxylic acid (TCA)(acetyl degradation route) and probably the 2-methylcitrate cycle I (propionate degradation route). Catalyzes the reversible isomerization of citrate to isocitrate via cis-aconitate. Also able to catalyze the hydration of cis-homoaconitate to yield (R)-homocitrate, but with a lower efficiency. Could catalyze the hydration of 2-methyl-cis-aconitate to yield (2R,3S)-2-methylisocitrate. The apo form of AcnA functions as a RNA-binding regulatory protein. The chain is Aconitate hydratase A (acoA) from Thermus thermophilus (strain ATCC 27634 / DSM 579 / HB8).